The sequence spans 87 residues: Small ribosomal subunit protein uS17 (87 aa).

The protein belongs to the universal ribosomal protein uS17 family. Part of the 30S ribosomal subunit.

One of the primary rRNA binding proteins, it binds specifically to the 5'-end of 16S ribosomal RNA. This is Small ribosomal subunit protein uS17 from Pelotomaculum thermopropionicum (strain DSM 13744 / JCM 10971 / SI).